The following is a 542-amino-acid chain: Importin subunit alpha (542 aa).

The residue at position 1 (methionine 1) is an N-acetylmethionine. Residues 1 to 11 (MDNGTDSSTSK) show a composition bias toward polar residues. The region spanning 1-65 (MDNGTDSSTS…RNFIPPTDGA (65 aa)) is the IBB domain. A disordered region spans residues 1–77 (MDNGTDSSTS…DEEDESSVSA (77 aa)). Basic and acidic residues predominate over residues 27-53 (FSADELRRRRDTQQVELRKAKRDEALA). One copy of the ARM 1; truncated repeat lies at 89–122 (LPQMTQQLNSDDMQEQLSATVKFRQILSREHRPP). ARM repeat units lie at residues 123 to 162 (IDVV…ASGT), 163 to 204 (SAQT…AGDS), 205 to 251 (TDYR…PQPD), 252 to 288 (WSVV…SDGP), 289 to 330 (QEAI…VTGN), 331 to 372 (DLQT…TAGN), 373 to 417 (TEQI…GLQR), and 418 to 471 (PDII…LNIN). The segment at 209 to 335 (DYVLQCNAME…IVTGNDLQTQ (127 aa)) is NLS binding site 1. An NLS binding site 2 region spans residues 419 to 505 (DIIRYLVSQG…KIYEKAYKII (87 aa)). The ARM 10; atypical repeat unit spans residues 472–508 (ENADFIEKAGGMEKIFNCQQNENDKIYEKAYKIIETY).

It belongs to the importin alpha family. In terms of assembly, forms a complex with an importin beta subunit. In the nucleus, interacts with NUP2 which accelerate release of NLSs, NUP2 is subsequently displaced by CSE1:RanGTP which mediates re-export and recycling. Interacts with HEH2, SHE2, and STS1.

Its subcellular location is the cytoplasm. The protein resides in the perinuclear region. Its function is as follows. Functions in nuclear protein import as an adapter protein for importin beta nuclear receptors. Binds specifically and directly to substrates containing either a simple or bipartite NLS motif. Promotes docking of import substrates to the nuclear envelope. Together with importin beta KAP95, mediates nuclear import of transcription factor GCN4. Together with tethering factor STS1, targets the proteasome to the nucleus. The chain is Importin subunit alpha (SRP1) from Saccharomyces cerevisiae (strain ATCC 204508 / S288c) (Baker's yeast).